The primary structure comprises 622 residues: Chaperone protein HscA homolog (622 aa).

Belongs to the heat shock protein 70 family.

Chaperone involved in the maturation of iron-sulfur cluster-containing proteins. Has a low intrinsic ATPase activity which is markedly stimulated by HscB. This is Chaperone protein HscA homolog from Burkholderia ambifaria (strain MC40-6).